The primary structure comprises 170 residues: Ribosome maturation factor RimM (170 aa).

The PRC barrel domain occupies 97 to 170; that stretch reads KPDEYYWVDL…LVVVDWDPEF (74 aa).

Belongs to the RimM family. As to quaternary structure, binds ribosomal protein uS19.

It localises to the cytoplasm. Its function is as follows. An accessory protein needed during the final step in the assembly of 30S ribosomal subunit, possibly for assembly of the head region. Essential for efficient processing of 16S rRNA. May be needed both before and after RbfA during the maturation of 16S rRNA. It has affinity for free ribosomal 30S subunits but not for 70S ribosomes. In Stenotrophomonas maltophilia (strain K279a), this protein is Ribosome maturation factor RimM.